We begin with the raw amino-acid sequence, 306 residues long: Ribonuclease Z (306 aa).

Residues histidine 63, histidine 65, aspartate 67, histidine 68, histidine 142, aspartate 213, and histidine 271 each coordinate Zn(2+). Aspartate 67 serves as the catalytic Proton acceptor.

This sequence belongs to the RNase Z family. Homodimer. The cofactor is Zn(2+).

It carries out the reaction Endonucleolytic cleavage of RNA, removing extra 3' nucleotides from tRNA precursor, generating 3' termini of tRNAs. A 3'-hydroxy group is left at the tRNA terminus and a 5'-phosphoryl group is left at the trailer molecule.. Zinc phosphodiesterase, which displays some tRNA 3'-processing endonuclease activity. Probably involved in tRNA maturation, by removing a 3'-trailer from precursor tRNA. The polypeptide is Ribonuclease Z (Oceanobacillus iheyensis (strain DSM 14371 / CIP 107618 / JCM 11309 / KCTC 3954 / HTE831)).